The primary structure comprises 505 residues: Lysine--tRNA ligase (505 aa).

Mg(2+)-binding residues include Glu-415 and Glu-422.

It belongs to the class-II aminoacyl-tRNA synthetase family. In terms of assembly, homodimer. It depends on Mg(2+) as a cofactor.

Its subcellular location is the cytoplasm. It catalyses the reaction tRNA(Lys) + L-lysine + ATP = L-lysyl-tRNA(Lys) + AMP + diphosphate. The sequence is that of Lysine--tRNA ligase from Pectobacterium carotovorum subsp. carotovorum (strain PC1).